The primary structure comprises 161 residues: Troponin C, slow skeletal and cardiac muscles (161 aa).

Position 1 is an N-acetylmethionine (Met1). EF-hand domains lie at 16–51 (QKNEFKAAFDIFVLGAEDGCISTKELGKVMRMLGQN), 52–87 (PTPEELQEMIDEVDEDGSGTVDFDEFLVMMVRCMKD), 92–127 (KTEEELSDLFRMFDKNADGYIDLEELKIMLQATGET), and 128–161 (ITEDDIEELMKDGDKNNDGRIDYDEFLEFMKGVE). Positions 65, 67, 69, 71, 76, 105, 107, 109, 111, 116, 141, 143, 145, 147, and 152 each coordinate Ca(2+).

This sequence belongs to the troponin C family.

Functionally, troponin is the central regulatory protein of striated muscle contraction. Tn consists of three components: Tn-I which is the inhibitor of actomyosin ATPase, Tn-T which contains the binding site for tropomyosin and Tn-C. The binding of calcium to Tn-C abolishes the inhibitory action of Tn on actin filaments. This is Troponin C, slow skeletal and cardiac muscles (TNNC1) from Gallus gallus (Chicken).